We begin with the raw amino-acid sequence, 228 residues long: UPF0173 metal-dependent hydrolase Lm4b_01588 (228 aa).

It belongs to the UPF0173 family.

The sequence is that of UPF0173 metal-dependent hydrolase Lm4b_01588 from Listeria monocytogenes serotype 4b (strain CLIP80459).